The sequence spans 415 residues: Fructose-like permease IIC component (415 aa).

Residues 1–46 (MAIKKRSATVVHGASGAAAAVKNPQASKSSFWGELPQHVMSGISRM) are Cytoplasmic-facing. Residues 35 to 415 (LPQHVMSGIS…RKGKLLIESL (381 aa)) enclose the PTS EIIC type-2 domain. A helical membrane pass occupies residues 47 to 67 (VPTLIMGGVILAFSQLIAYSW). At 68–101 (LKIPADIGIMDALNSGKFSGFDLSLLKFAWLSQS) the chain is on the periplasmic side. The chain crosses the membrane as a helical span at residues 102–122 (FGGVLFGFAIPMFAAFVANSI). Residues 123–126 (GGKL) lie on the Cytoplasmic side of the membrane. The chain crosses the membrane as a helical span at residues 127 to 147 (AFPAGFIGGLMSTQPTQLLNF). The Periplasmic segment spans residues 148 to 157 (DPSTMQWATS). The helical transmembrane segment at 158 to 178 (SPVPSTFIGALIISIVAGYLV) threads the bilayer. Residues 179-197 (KWMNQKIQLPDFLLAFKTT) are Cytoplasmic-facing. Residues 198 to 218 (FLLPILSAIFVMLAMYYVITP) traverse the membrane as a helical segment. At 219 to 237 (FGGWINGGIRTVLTAAGEK) the chain is on the periplasmic side. The helical transmembrane segment at 238 to 258 (GALMYAMGIAAATAIDLGGPI) threads the bilayer. The Cytoplasmic portion of the chain corresponds to 259–276 (NKAAGFVAFSFTTDHVLP). The chain crosses the membrane as a helical span at residues 277-297 (VTARSIAIVIPPIGLGLATII). Residues 298-318 (DRRLTGKRLFNAQLYPQGKTA) lie on the Periplasmic side of the membrane. Residues 319–339 (MFLAFMGISEGAIPFALESPI) traverse the membrane as a helical segment. The Cytoplasmic segment spans residues 340–341 (TA). The helical transmembrane segment at 342-362 (IPSYMVGAIVGSTAAVWLGAV) threads the bilayer. Topologically, residues 363 to 378 (QWFPESAIWAWPLVTN) are periplasmic. Residues 379–399 (LGVYMAGIALGAIITALMVVF) form a helical membrane-spanning segment. Topologically, residues 400–415 (LRLMMFRKGKLLIESL) are cytoplasmic.

The protein resides in the cell inner membrane. In terms of biological role, the phosphoenolpyruvate-dependent sugar phosphotransferase system (PTS), a major carbohydrate active -transport system, catalyzes the phosphorylation of incoming sugar substrates concomitant with their translocation across the cell membrane. This is Fructose-like permease IIC component (fryC) from Escherichia coli O6:H1 (strain CFT073 / ATCC 700928 / UPEC).